The chain runs to 250 residues: Proteasome subunit alpha type-4-1 (250 aa).

It belongs to the peptidase T1A family. As to quaternary structure, the 26S proteasome consists of a 20S proteasome core and two 19S regulatory subunits. The 20S proteasome core is composed of 28 subunits that are arranged in four stacked rings, resulting in a barrel-shaped structure. The two end rings are each formed by seven alpha subunits, and the two central rings are each formed by seven beta subunits. The catalytic chamber with the active sites is on the inside of the barrel.

It is found in the cytoplasm. The protein localises to the nucleus. Its function is as follows. The proteasome is a multicatalytic proteinase complex which is characterized by its ability to cleave peptides with Arg, Phe, Tyr, Leu, and Glu adjacent to the leaving group at neutral or slightly basic pH. The proteasome has an ATP-dependent proteolytic activity. This chain is Proteasome subunit alpha type-4-1, found in Oryza sativa subsp. indica (Rice).